The sequence spans 945 residues: MGAIGGDEVVQWDKMDGGEVVNGGGGGGVGKLERILVSVRLRPLSDKEIARGDPSEWECINDTTIISRSTFPDRPSAPTAYSFDRVFRSDCDTNEVYKQGAKEVALSVVSGINSSIFAYGQTSSGKTYTMTGITEYTVADIYDYIGKHEERAFVLKFSAIEIYNEVVRDLLSAENTPLRLWDDAEKGTYVENLTEVVLRDWNHLKELISVCEAQRKTGETYLNENSSRSHQILKLTIESSAREFLGKDKSTTLVASVNFVDLAGSERASQALSAGARLKEGCHINRSLLTLGTVIRKLSKVRNGHIPYRDSKLTRILQPSLGGNARTAIICTMSPARSHMEQSRNTLLFASCAKEVVTNAQVNVVMSDKALVKQLQKELARLESELRCPASYSSLESLVKEKDNQIRKMEKEIKELKLQRDLAQSRLQDLLQVVGDNHVHVSKQSSVSGRNFTFDVPQTCEDEQSTTESSEVVDSVQNFRFQGRRVAQREHKPQQAENNVQFTTPSRYSVSSPPFSGMLPTNRSDHLSQISNEDSDDICKEVRCIETNETGGNECLESSAVGSNSLQDPNAGSSMHINNDSNSSMNSRLRDESPVTLEQHLENVRKPFANIVKDLGSSTRNSSSSKVLGRSRSCRSLTGSSLFEDLEKDDCTPPNRSFIDFAGRPQNCQRRGSALNYDAESETLSRAGSMLSEITTTRDGLKANSSVAGDTEFTGIGEFVAELKEMAQVQYQKQLGHSGNGDLAEGTIRSVGLDPITDALQSPSRWPLEFEKKQQEIIDFWHACNVSLVHRTYFFLLFKGDPADSIYMEVELRRLSFLKDTYSNGAIASIPNTSLVSSAKKLQREREMLCRQMQRRLSIEERESMYTKWGVSLASKRRRLQVARCLWTETKDLEHVRESASLVARLIGLLEPGKALREMFGLSFAPQQFTRRSYNSWRYGRSSLN.

The 323-residue stretch at 34–356 (RILVSVRLRP…LLFASCAKEV (323 aa)) folds into the Kinesin motor domain. 120–127 (GQTSSGKT) contributes to the ATP binding site. A coiled-coil region spans residues 365–437 (VMSDKALVKQ…QDLLQVVGDN (73 aa)). Disordered regions lie at residues 484 to 512 (RRVA…SVSS) and 553 to 588 (NECL…MNSR). Composition is skewed to polar residues over residues 495 to 512 (QAEN…SVSS) and 560 to 587 (AVGS…SMNS).

This sequence belongs to the TRAFAC class myosin-kinesin ATPase superfamily. Kinesin family. KIN-7 subfamily. In terms of assembly, binds microtubules.

Binds ATP/ADP in vitro. Possesses low ATPase activity but high affinity for microtubules. The polypeptide is Kinesin-like protein KIN-7F (Oryza sativa subsp. japonica (Rice)).